A 479-amino-acid chain; its full sequence is tRNA modification GTPase MnmE (479 aa).

(6S)-5-formyl-5,6,7,8-tetrahydrofolate is bound by residues Arg-30, Glu-91, and Lys-130. A TrmE-type G domain is found at 226-402 (GFRIVLTGLP…VLKDLVKEFA (177 aa)). Position 236 (Asn-236) interacts with K(+). Residues 236–241 (NVGKSS), 255–261 (TDIPGTT), and 280–283 (DTAG) each bind GTP. Ser-240 contributes to the Mg(2+) binding site. K(+) contacts are provided by Thr-255, Ile-257, and Thr-260. Thr-261 contributes to the Mg(2+) binding site. Lys-479 serves as a coordination point for (6S)-5-formyl-5,6,7,8-tetrahydrofolate.

It belongs to the TRAFAC class TrmE-Era-EngA-EngB-Septin-like GTPase superfamily. TrmE GTPase family. Homodimer. Heterotetramer of two MnmE and two MnmG subunits. K(+) serves as cofactor.

The protein localises to the cytoplasm. In terms of biological role, exhibits a very high intrinsic GTPase hydrolysis rate. Involved in the addition of a carboxymethylaminomethyl (cmnm) group at the wobble position (U34) of certain tRNAs, forming tRNA-cmnm(5)s(2)U34. The sequence is that of tRNA modification GTPase MnmE from Bdellovibrio bacteriovorus (strain ATCC 15356 / DSM 50701 / NCIMB 9529 / HD100).